Reading from the N-terminus, the 559-residue chain is DNA ligase (559 aa).

Glu-231 provides a ligand contact to ATP. Lys-233 functions as the N6-AMP-lysine intermediate in the catalytic mechanism. Residues Arg-238 and Glu-285 each contribute to the ATP site. Mg(2+) is bound by residues Glu-285 and Glu-379. Residues Lys-384 and Lys-399 each coordinate ATP.

It belongs to the ATP-dependent DNA ligase family. Interacts with host TOP2A and TOP2B. The cofactor is Mg(2+).

It is found in the host cytoplasm. The enzyme catalyses ATP + (deoxyribonucleotide)n-3'-hydroxyl + 5'-phospho-(deoxyribonucleotide)m = (deoxyribonucleotide)n+m + AMP + diphosphate.. In terms of biological role, DNA ligase that seals nicks in double-stranded DNA during DNA replication, DNA recombination and DNA repair. Recruits cellular topoisomerase II to sites of viral replication and assembly. This Monkeypox virus protein is DNA ligase (OPG180).